Consider the following 304-residue polypeptide: Coenzyme PQQ synthesis protein B (304 aa).

The protein belongs to the PqqB family.

It participates in cofactor biosynthesis; pyrroloquinoline quinone biosynthesis. Functionally, may be involved in the transport of PQQ or its precursor to the periplasm. This is Coenzyme PQQ synthesis protein B from Azoarcus sp. (strain BH72).